Consider the following 61-residue polypeptide: Large ribosomal subunit protein bL28 (61 aa).

This sequence belongs to the bacterial ribosomal protein bL28 family.

This Geobacillus stearothermophilus (Bacillus stearothermophilus) protein is Large ribosomal subunit protein bL28 (rpmB).